Here is a 782-residue protein sequence, read N- to C-terminus: MKISSGAINFSTIPNQVKKLITSIREHTKNGLASKITSVKNTHASLNEKLKTGKSSSIEFALPQKIKDFFQPKDKNTLNKTLITVKNIKDTNNAGKKNISAEDVSKMNAAFMRKHIANQTCDYNYRMTGAAPLPGGVSVSANNRPTVSEGRTPPVSPSLSLQATSSPSSPADWAKKLTDAVLRQKAGETLTAADRDFSNADFRNITFSKILPPSFMERDGDIIKGFNFSNSKFTYSDISHLHFDECRFTYSTLSDVVCSNTKFSNSDMNEVFLQYSITTQQQPSFIDTTLKNTLIRHKANLSGVILNEPDNSSPPSVSGGGNFIRLGDIWLQMPLLWTENAVDGFLNHEHNNGKSILMTIDSLPDKYSQEKVQAMEDLVKSLRGGRLTEACIRPVESSLVSVLAHPPYTQSALIREWLGPVQERFFAHQCQTYNDVPLPTPDTYYQQRILPVLLDSFDRNSAAMTTHSGLFNQVILHCMTGVDCTDGTRQKAAALYEQYLAHPAVSPHIHNGLFGNYDGSPDWTTRAADNFLLLSSQDSDTAMMLSTDTLLTMLNPTPDTAWDNFYLLRAGENVSTAQISPVELFRHDFPVFLAAFNQQATQRRFGELIDIILSTEEHGELNQQFIAATNQKHSTVKLIDDASVSRLATIFAPLLPEGKLSPAHYQHILSAYHLTDATPQKQAETLFCLSTAFARYSSSAIFGTEHDSPPALRGYAEALMQKAWELSPAIFPSSEQFTDWSDRFHGLHGAFTCTSVVADSMQRHARKYFPSVLSSILPLAWA.

The segment at 137 to 171 is disordered; sequence VSVSANNRPTVSEGRTPPVSPSLSLQATSSPSSPA. Positions 157–171 are enriched in low complexity; sequence PSLSLQATSSPSSPA. Cysteine 753 acts as the Glycyl thioester intermediate in catalysis.

The protein belongs to the SopA E3 ligase family. Post-translationally, ubiquitinated in the presence of host E1 ubiquitin-activating enzyme, E2 ubiquitin-conjugating enzyme and ubiquitin.

The protein resides in the secreted. The protein localises to the host cell. It catalyses the reaction S-ubiquitinyl-[E2 ubiquitin-conjugating enzyme]-L-cysteine + [acceptor protein]-L-lysine = [E2 ubiquitin-conjugating enzyme]-L-cysteine + N(6)-ubiquitinyl-[acceptor protein]-L-lysine.. In terms of biological role, effector proteins function to alter host cell physiology and promote bacterial survival in host tissues. This protein is an E3 ubiquitin ligase that interferes with host's ubiquitination pathway. The chain is E3 ubiquitin-protein ligase SopA (sopA) from Salmonella enteritidis PT4 (strain P125109).